A 445-amino-acid polypeptide reads, in one-letter code: Probable phosphoglucosamine mutase (445 aa).

The Phosphoserine intermediate role is filled by serine 99. Positions 99, 238, 240, and 242 each coordinate Mg(2+). The residue at position 99 (serine 99) is a Phosphoserine.

Belongs to the phosphohexose mutase family. Mg(2+) is required as a cofactor. Post-translationally, activated by phosphorylation.

The catalysed reaction is alpha-D-glucosamine 1-phosphate = D-glucosamine 6-phosphate. In terms of biological role, catalyzes the conversion of glucosamine-6-phosphate to glucosamine-1-phosphate. The polypeptide is Probable phosphoglucosamine mutase (Methanobrevibacter smithii (strain ATCC 35061 / DSM 861 / OCM 144 / PS)).